Here is a 432-residue protein sequence, read N- to C-terminus: Muscle cell intermediate filament protein OV71 (432 aa).

The interval 1–111 is coil 1B; it reads KLIDELEEYK…RVHDQEISEL (111 aa). Residues 1-277 form the IF rod domain; the sequence is KLIDELEEYK…KMLEGEENRA (277 aa). The segment at 112–128 is linker 12; it reads QAMAARDTTSENREYFK. Positions 129–277 are coil 2; the sequence is NELSSAIRDI…KMLEGEENRA (149 aa). The segment at 278 to 432 is tail; the sequence is GLRQLVEQVV…HIQRSSHTIS (155 aa). Residues 310–427 form the LTD domain; sequence SRTSFQRSAK…EERASHIQRS (118 aa).

It belongs to the intermediate filament family.

The protein is Muscle cell intermediate filament protein OV71 (OV71) of Onchocerca volvulus.